A 315-amino-acid polypeptide reads, in one-letter code: Thioredoxin reductase (315 aa).

34 to 41 (EGQKVGGQ) is an FAD binding site. Residues cysteine 134 and cysteine 137 are joined by a disulfide bond. 282-291 (DIRVKSLRQV) contacts FAD.

This sequence belongs to the class-II pyridine nucleotide-disulfide oxidoreductase family. In terms of assembly, homodimer. The cofactor is FAD.

It localises to the cytoplasm. The enzyme catalyses [thioredoxin]-dithiol + NADP(+) = [thioredoxin]-disulfide + NADPH + H(+). This chain is Thioredoxin reductase (trxB), found in Peptoclostridium acidaminophilum (Eubacterium acidaminophilum).